The primary structure comprises 308 residues: Homeobox-leucine zipper protein HOX2 (308 aa).

Disordered regions lie at residues 15–36 (QGSLTSSTTTTSSPGAGSSSPW) and 71–117 (QGRA…RKKL). The span at 74–88 (ASTSPDSAAALSSAS) shows a compositional bias: low complexity. A DNA-binding region (homeobox) is located at residues 112–171 (GGRKKLRLSKDQAAVLEECFKTHSTLNPKQKVALANRLGLRPRQVEVWFQNRRARTKLKQ). Positions 170–214 (KQTEVDCEYLKRWCERLADENKRLEKELADLRALKAAPSPASASA) are leucine-zipper.

Belongs to the HD-ZIP homeobox family. Class II subfamily. Homodimer. May form a heterodimer with HOX1, HOX3 or HOX7. As to expression, expressed in seedlings, roots, leaves, nodes, internodes, flowers and embryo.

It is found in the nucleus. Its function is as follows. Probable transcription factor that binds to the DNA sequence 5'-CAAT[GC]ATTG-3'. In Oryza sativa subsp. indica (Rice), this protein is Homeobox-leucine zipper protein HOX2 (HOX2).